The chain runs to 203 residues: Akirin-2 (203 aa).

Ser18 and Ser21 each carry phosphoserine. A Nuclear localization signal motif is present at residues 22–27 (PKRRRC). Position 57 is a phosphoserine (Ser57). Residues 115–137 (PHAFLLSGPASPGTPSGTSSPLK) are disordered. Positions 119 to 135 (LLSGPASPGTPSGTSSP) are enriched in low complexity. Positions 200 to 203 (SYVS) match the SYVS motif motif.

Belongs to the akirin family. Homodimer. Interacts with IPO9; the interaction is direct. Associates with 20S and 26S proteasomes. Interacts with SMARCD1; promoting SWI/SNF complex recruitment. Interacts with NFKBIZ. Interacts with YWHAB. Polyubiquitinated. Polyubiquitination is dependent of UBR5 that extends pre-ubiquitinated AKIRIN2.

The protein localises to the nucleus. The protein resides in the cytoplasm. Its subcellular location is the membrane. Molecular adapter that acts as a bridge between a variety of multiprotein complexes, and which is involved in embryonic development, immunity, myogenesis and brain development. Plays a key role in nuclear protein degradation by promoting import of proteasomes into the nucleus: directly binds to fully assembled 20S proteasomes at one end and to nuclear import receptor IPO9 at the other end, bridging them together and mediating the import of pre-assembled proteasome complexes through the nuclear pore. Involved in innate immunity by regulating the production of interleukin-6 (IL6) downstream of Toll-like receptor (TLR): acts by bridging the NF-kappa-B inhibitor NFKBIZ and the SWI/SNF complex, leading to promote induction of IL6. Also involved in adaptive immunity by promoting B-cell activation. Involved in brain development: required for the survival and proliferation of cerebral cortical progenitor cells. Involved in myogenesis: required for skeletal muscle formation and skeletal development, possibly by regulating expression of muscle differentiation factors. The chain is Akirin-2 from Bos taurus (Bovine).